Consider the following 290-residue polypeptide: Cilia- and flagella-associated protein 298 (290 aa).

This sequence belongs to the CFAP298 family. In terms of assembly, interacts with dnaaf1/swt. Interacts with lrrc6/sea. Interacts with dvl (via DEP and PDZ domains). Strongly expressed in ciliated tissues of the embryonic trunk, including the pronephric ducts and spinal canal.

Its subcellular location is the cytoplasm. The protein localises to the cytoskeleton. It localises to the cilium basal body. Its function is as follows. Plays a role in motile cilium function, possibly by acting on outer dynein arm assembly. Seems to be important for initiation rather than maintenance of cilium motility. Required for correct positioning of cilia at the apical cell surface, suggesting an additional role in the planar cell polarity (PCP) pathway. May suppress canonical Wnt signaling activity. In Danio rerio (Zebrafish), this protein is Cilia- and flagella-associated protein 298.